The sequence spans 1087 residues: Kinesin-like protein KIN-14F (1087 aa).

The region spanning 1 to 110 is the Calponin-homology (CH) domain; that stretch reads MDQGAMETLP…CILCLKGFYE (110 aa). The interval 136-155 is disordered; the sequence is SSPPQYGIGSESTTDESVSL. The 329-residue stretch at 377–705 folds into the Kinesin motor domain; it reads TIRVYCRVRP…LKFAQRVASI (329 aa). 461–468 is an ATP binding site; the sequence is GQTGSGKT. Residues 710–749 are a coiled coil; that stretch reads ARSNKETGEIRDLKDEISSLKSAMEKKEAELEQLRSGSIR. 3 disordered regions span residues 740–858, 923–949, and 1004–1087; these read LEQL…PVSR, QGGV…FQKL, and DSTL…FMVP. 3 stretches are compositionally biased toward polar residues: residues 744–754, 780–797, and 836–856; these read RSGSIRNTTEC, PQPN…CSTG, and TDRA…NLPV. Over residues 1017-1033 the composition is skewed to polar residues; it reads EPPSKSKNAQRNSSKNS. Residues 1042 to 1054 show a composition bias toward basic and acidic residues; the sequence is YAHEDTSLVDDKP. Residues 1076-1087 show a composition bias toward basic residues; that stretch reads SRSTHHARFMVP.

It belongs to the TRAFAC class myosin-kinesin ATPase superfamily. Kinesin family. KIN-14 subfamily. Interacts (via C-terminus) with VDAC3. Expressed in roots, leaves, stems and flowers (at protein level).

The protein resides in the cytoplasm. The protein localises to the cytoskeleton. It localises to the mitochondrion. Functionally, required for keeping the ATP levels stable and balancing the aerobic respiration pathways during seed germination at low temperature. This is Kinesin-like protein KIN-14F from Arabidopsis thaliana (Mouse-ear cress).